Consider the following 204-residue polypeptide: Protein FAM167A (204 aa).

The segment at 58 to 80 (GLAVSDGSTELEKDAGLKPRATP) is disordered. Residues 113 to 146 (LRKELMEMRIQDQQLARQLMRLRGDINKLKVEQT) adopt a coiled-coil conformation.

It belongs to the FAM167 (SEC) family.

This is Protein FAM167A (fam167a) from Danio rerio (Zebrafish).